The following is a 347-amino-acid chain: Anthranilate phosphoribosyltransferase (347 aa).

5-phospho-alpha-D-ribose 1-diphosphate contacts are provided by residues Gly-88, 91 to 92, Thr-96, 98 to 101, 116 to 124, and Ser-128; these read GD, NIST, and KHGNRSVSS. Gly-88 is an anthranilate binding site. Ser-100 is a Mg(2+) binding site. Anthranilate is bound at residue Asn-119. Residue Arg-174 coordinates anthranilate. Residues Asp-232 and Glu-233 each coordinate Mg(2+).

This sequence belongs to the anthranilate phosphoribosyltransferase family. Homodimer. Requires Mg(2+) as cofactor.

The enzyme catalyses N-(5-phospho-beta-D-ribosyl)anthranilate + diphosphate = 5-phospho-alpha-D-ribose 1-diphosphate + anthranilate. Its pathway is amino-acid biosynthesis; L-tryptophan biosynthesis; L-tryptophan from chorismate: step 2/5. Its function is as follows. Catalyzes the transfer of the phosphoribosyl group of 5-phosphorylribose-1-pyrophosphate (PRPP) to anthranilate to yield N-(5'-phosphoribosyl)-anthranilate (PRA). This Shewanella sp. (strain ANA-3) protein is Anthranilate phosphoribosyltransferase.